We begin with the raw amino-acid sequence, 208 residues long: RNA chaperone ProQ (208 aa).

Positions 106-127 are enriched in basic and acidic residues; sequence SKAKVATRRKEQAKKAREEAKA. Residues 106 to 154 form a disordered region; sequence SKAKVATRRKEQAKKAREEAKAKKTARAATPPKRRPQPAAKKVEQPVET.

This sequence belongs to the ProQ family.

It is found in the cytoplasm. Its function is as follows. RNA chaperone with significant RNA binding, RNA strand exchange and RNA duplexing activities. The protein is RNA chaperone ProQ of Aliivibrio fischeri (strain ATCC 700601 / ES114) (Vibrio fischeri).